We begin with the raw amino-acid sequence, 148 residues long: 3-dehydroquinate dehydratase (148 aa).

Residue Tyr-26 is the Proton acceptor of the active site. Residues Asn-75, His-81, and Asp-88 each contribute to the substrate site. His-101 acts as the Proton donor in catalysis. Substrate-binding positions include 102 to 103 (LS) and Arg-112.

It belongs to the type-II 3-dehydroquinase family. As to quaternary structure, homododecamer.

It carries out the reaction 3-dehydroquinate = 3-dehydroshikimate + H2O. The protein operates within metabolic intermediate biosynthesis; chorismate biosynthesis; chorismate from D-erythrose 4-phosphate and phosphoenolpyruvate: step 3/7. Functionally, catalyzes a trans-dehydration via an enolate intermediate. This chain is 3-dehydroquinate dehydratase, found in Shewanella frigidimarina (strain NCIMB 400).